Reading from the N-terminus, the 328-residue chain is Cytochrome f (328 aa).

The signal sequence occupies residues 1 to 44; that stretch reads MRTFNFLSFPQVHRQALVKAVLVAIATVSLLLTSDVINPQSAQA. Residues tyrosine 45, cysteine 66, cysteine 69, and histidine 70 each coordinate heme. Residues 294–314 traverse the membrane as a helical segment; it reads IKGLVLFLGGIMLCQILLVIK.

The protein belongs to the cytochrome f family. As to quaternary structure, the 4 large subunits of the cytochrome b6-f complex are cytochrome b6, subunit IV (17 kDa polypeptide, PetD), cytochrome f and the Rieske protein, while the 4 small subunits are PetG, PetL, PetM and PetN. The complex functions as a dimer. The cofactor is heme.

The protein localises to the cellular thylakoid membrane. Functionally, component of the cytochrome b6-f complex, which mediates electron transfer between photosystem II (PSII) and photosystem I (PSI), cyclic electron flow around PSI, and state transitions. In Microcystis aeruginosa (strain NIES-843 / IAM M-2473), this protein is Cytochrome f.